We begin with the raw amino-acid sequence, 409 residues long: Glutamyl-tRNA reductase (409 aa).

Residues 46 to 49 (TCNR), Ser88, 93 to 95 (ENE), and Gln99 each bind substrate. Cys47 functions as the Nucleophile in the catalytic mechanism. An NADP(+)-binding site is contributed by 164 to 169 (GNGMIA).

It belongs to the glutamyl-tRNA reductase family. In terms of assembly, homodimer.

It catalyses the reaction (S)-4-amino-5-oxopentanoate + tRNA(Glu) + NADP(+) = L-glutamyl-tRNA(Glu) + NADPH + H(+). The protein operates within porphyrin-containing compound metabolism; protoporphyrin-IX biosynthesis; 5-aminolevulinate from L-glutamyl-tRNA(Glu): step 1/2. In terms of biological role, catalyzes the NADPH-dependent reduction of glutamyl-tRNA(Glu) to glutamate 1-semialdehyde (GSA). This is Glutamyl-tRNA reductase from Thermoplasma acidophilum (strain ATCC 25905 / DSM 1728 / JCM 9062 / NBRC 15155 / AMRC-C165).